A 373-amino-acid polypeptide reads, in one-letter code: Transmembrane protein adipocyte-associated 1 (373 aa).

Residues Asn11 and Asn23 are each glycosylated (N-linked (GlcNAc...) asparagine). 7 helical membrane-spanning segments follow: residues 48–68 (LLLLIPNVLFLIFLLWKLPSA), 76–96 (SSPIFITFYILVFVVALVGIA), 123–143 (FFLLAIELSVIILGLAFGHLE), 151–171 (VLAITTVLSLAYSVTQGTLEI), 192–212 (QFWLVSSCFFFLVYSLVVILP), 234–254 (ILALLNLLQGLGSVLLCFDII), and 265–285 (FLYFSFFAPLIYVAFLRGFFG). A glycan (N-linked (GlcNAc...) asparagine) is linked at Asn361.

It belongs to the UPF0359 family. In terms of tissue distribution, ubiquitous, with higher levels in heart, placenta and kidney.

It is found in the membrane. The protein is Transmembrane protein adipocyte-associated 1 (TPRA1) of Homo sapiens (Human).